The primary structure comprises 322 residues: Adenine deaminase (322 aa).

3 residues coordinate Zn(2+): His11, His13, and His189. Catalysis depends on Glu192, which acts as the Proton donor. Asp270 contacts Zn(2+). Asp271 contacts substrate.

The protein belongs to the metallo-dependent hydrolases superfamily. Adenosine and AMP deaminases family. Adenine deaminase type 2 subfamily. Zn(2+) serves as cofactor.

It catalyses the reaction adenine + H2O + H(+) = hypoxanthine + NH4(+). Functionally, catalyzes the hydrolytic deamination of adenine to hypoxanthine. Plays an important role in the purine salvage pathway and in nitrogen catabolism. The protein is Adenine deaminase of Rhizobium johnstonii (strain DSM 114642 / LMG 32736 / 3841) (Rhizobium leguminosarum bv. viciae).